The following is a 421-amino-acid chain: Meiotic fizzy-related protein 1 (421 aa).

Residues 79-107 form a disordered region; it reads DTPDRKSYSLSPISPQSQDMLRQPQKPKR. The segment covering 86–98 has biased composition (polar residues); that stretch reads YSLSPISPQSQDM. 7 WD repeats span residues 123–160, 164–203, 206–246, 247–286, 289–331, 333–374, and 377–416; these read KNDFYLNLLDWGQSNVLAVGLASSIYLWSAASGKVVQL, GATNHVTSVLWTGKGTQLAVGTDSGVIYIWDIESTKSVRS, GHSE…EMMK, VHEQEICGLQWDRSLGQLASGGNDNNLFVWDYRSSRPLHK, EHTA…LQNK, DTGS…NIAN, and AHTNRVLYLSMSPDGQSIVTGAGDETLRFWKLFNKKPKEE.

It belongs to the WD repeat CDC20/Fizzy family. As to quaternary structure, interacts with mes1.

It localises to the nucleus. In terms of biological role, meiosis-specific activator of the anaphase promoting complex/cyclosome (APC/C). Involved in cdc13 degradation. This Schizosaccharomyces pombe (strain 972 / ATCC 24843) (Fission yeast) protein is Meiotic fizzy-related protein 1 (mfr1).